The following is a 325-amino-acid chain: MANALASATCERCKGGFAPAEKIVNSNGELYHEQCFVCAQCFQQFPEGLFYEFEGRKYCEHDFQMLFAPCCHQCGEFIIGRVIKAMNNSWHPECFRCDLCQEVLADIGFVKNAGRHLCRPCHNREKARGLGKYICQKCHAIIDEQPLIFKNDPYHPDHFNCANCGKELTADARELKGELYCLPCHDKMGVPICGACRRPIEGRVVNAMGKQWHVEHFVCAKCEKPFLGHRHYERKGLAYCETHYNQLFGDVCFHCNRVIEGDVVSALNKAWCVSCFACSTCNTKLTLKNKFVEFDMKPVCKKCYEKFPLELKKRLKKLSETLGRK.

Alanine 2 is modified (N-acetylalanine). 5 consecutive LIM zinc-binding domains span residues 10 to 62 (CERC…CEHD), 71 to 121 (CHQC…CRPC), 135 to 184 (CQKC…CLPC), 193 to 243 (CGAC…CETH), and 252 to 303 (CFHC…CKKC).

Component of the heterotrimeric IPP (ILK-PINCH-PARVIN) complex composed of ILK, LIMS1/PINCH and PARVA; the complex binds to F-actin via the C-terminal tail of LIMS1 and the N-terminal region of PARVA, promoting F-actin filament bundling. Formation of the IPP complex is dependent on protein kinase C and precedes integrin-mediated cell adhesion and spreading. Competes with LIMS2 for interaction with ILK. Interacts with SH3/SH2 adapter NCK2, thereby linking the complex to cell surface receptors. Interacts (via LIM zinc-binding 5) with TGFB1I1.

Its subcellular location is the cell junction. It is found in the focal adhesion. The protein localises to the cell membrane. Within the IPP (ILK-PINCH-PARVIN) complex, binds to F-actin, promoting F-actin bundling, a process required to generate force for actin cytoskeleton reorganization and subsequent dynamic cell adhesion events such as cell spreading and migration. The protein is LIM and senescent cell antigen-like-containing domain protein 1 (Lims1) of Mus musculus (Mouse).